The following is a 295-amino-acid chain: Probable endonuclease 4 (295 aa).

Residues His78, His118, Glu154, Asp188, His191, His225, Asp238, His240, and Glu270 each coordinate Zn(2+).

The protein belongs to the AP endonuclease 2 family. Requires Zn(2+) as cofactor.

The catalysed reaction is Endonucleolytic cleavage to 5'-phosphooligonucleotide end-products.. Functionally, endonuclease IV plays a role in DNA repair. It cleaves phosphodiester bonds at apurinic or apyrimidinic (AP) sites, generating a 3'-hydroxyl group and a 5'-terminal sugar phosphate. This chain is Probable endonuclease 4, found in Vibrio parahaemolyticus serotype O3:K6 (strain RIMD 2210633).